Reading from the N-terminus, the 81-residue chain is Large ribosomal subunit protein bL27 (81 aa).

Positions 1–11 are enriched in polar residues; sequence MATSKSGGSSK. The tract at residues 1-20 is disordered; the sequence is MATSKSGGSSKNGRDSISKR.

This sequence belongs to the bacterial ribosomal protein bL27 family.

This is Large ribosomal subunit protein bL27 from Borreliella afzelii (strain PKo) (Borrelia afzelii).